Here is a 226-residue protein sequence, read N- to C-terminus: Phosphoglycolate phosphatase (226 aa).

Catalysis depends on aspartate 8, which acts as the Nucleophile. 2 residues coordinate Mg(2+): aspartate 8 and aspartate 10. Lysine 152 is a binding site for substrate. The Mg(2+) site is built by aspartate 175 and aspartate 179.

Belongs to the archaeal SPP-like hydrolase family. It depends on Mg(2+) as a cofactor.

It carries out the reaction 2-phosphoglycolate + H2O = glycolate + phosphate. Its function is as follows. Catalyzes the dephosphorylation of 2-phosphoglycolate. The polypeptide is Phosphoglycolate phosphatase (Natronomonas pharaonis (strain ATCC 35678 / DSM 2160 / CIP 103997 / JCM 8858 / NBRC 14720 / NCIMB 2260 / Gabara) (Halobacterium pharaonis)).